The following is a 211-amino-acid chain: Protein-L-isoaspartate O-methyltransferase (211 aa).

The active site involves serine 62.

This sequence belongs to the methyltransferase superfamily. L-isoaspartyl/D-aspartyl protein methyltransferase family.

Its subcellular location is the cytoplasm. It catalyses the reaction [protein]-L-isoaspartate + S-adenosyl-L-methionine = [protein]-L-isoaspartate alpha-methyl ester + S-adenosyl-L-homocysteine. In terms of biological role, catalyzes the methyl esterification of L-isoaspartyl residues in peptides and proteins that result from spontaneous decomposition of normal L-aspartyl and L-asparaginyl residues. It plays a role in the repair and/or degradation of damaged proteins. This is Protein-L-isoaspartate O-methyltransferase from Shewanella woodyi (strain ATCC 51908 / MS32).